The sequence spans 95 residues: NELL2-interacting cell ontogeny regulator 1 (95 aa).

The N-terminal stretch at 1-34 is a signal peptide; it reads MAPPPACRSPMSPPPPPLLLLLLSLALLGARARA.

It belongs to the NICOL family. Interacts with NELL2; triggers epididymal differentiation. Interacts with cell surface receptor TFRC; the interaction mediates uptake of NICOL1 into fibroblasts. As to expression, detected in the brain (at protein level). Also expressed at low levels in the kidney, primarily in tubular epithelial cells.

The protein localises to the secreted. It is found in the cytoplasm. It localises to the perinuclear region. MRNA-binding protein which interacts with a range of target mRNAs including SERPINE1, ACTA2, CCN2 and COL4A1 and may promote extracellular matrix production. Binds to the 3'-UTR of SERPINE1 mRNA and stabilizes the mRNA, possibly by competing for binding with SERBP1 and preventing SERBP1-mediated mRNA degradation. Also binds to the 3'-UTR of ACTA2. Testis-derived lumicrine factor that triggers epididymal differentiation and sperm maturation. This is NELL2-interacting cell ontogeny regulator 1 from Homo sapiens (Human).